A 434-amino-acid polypeptide reads, in one-letter code: uncharacterized protein (434 aa).

The region spanning 4–62 is the TRAM domain; sequence LLTIHTQVEGEITALAFGGAGILRYHGFVIFVPFTAPGDQIICRIIEIKKSFAVAELVK. Residues C75, C81, C84, and C161 each contribute to the [4Fe-4S] cluster site. Q266, Y295, E316, and N364 together coordinate S-adenosyl-L-methionine. C391 acts as the Nucleophile in catalysis.

The protein belongs to the class I-like SAM-binding methyltransferase superfamily. RNA M5U methyltransferase family.

This is an uncharacterized protein from Protochlamydia amoebophila (strain UWE25).